Here is a 444-residue protein sequence, read N- to C-terminus: Ribosomal protein uS12 methylthiotransferase RimO (444 aa).

One can recognise an MTTase N-terminal domain in the interval 4-120 (KSAALVSLGC…LKSFIRDHEA (117 aa)). 6 residues coordinate [4Fe-4S] cluster: C13, C49, C83, C157, C161, and C164. The 229-residue stretch at 143–371 (VEGRSSAYVK…LELQRGISRR (229 aa)) folds into the Radical SAM core domain. In terms of domain architecture, TRAM spans 374–442 (ESLVGRVLPV…DYDVEAELLS (69 aa)).

It belongs to the methylthiotransferase family. RimO subfamily. It depends on [4Fe-4S] cluster as a cofactor.

The protein localises to the cytoplasm. The catalysed reaction is L-aspartate(89)-[ribosomal protein uS12]-hydrogen + (sulfur carrier)-SH + AH2 + 2 S-adenosyl-L-methionine = 3-methylsulfanyl-L-aspartate(89)-[ribosomal protein uS12]-hydrogen + (sulfur carrier)-H + 5'-deoxyadenosine + L-methionine + A + S-adenosyl-L-homocysteine + 2 H(+). Catalyzes the methylthiolation of an aspartic acid residue of ribosomal protein uS12. The chain is Ribosomal protein uS12 methylthiotransferase RimO from Syntrophobacter fumaroxidans (strain DSM 10017 / MPOB).